A 430-amino-acid polypeptide reads, in one-letter code: Glutamine synthetase leaf isozyme, chloroplastic (430 aa).

The transit peptide at 1–49 (MAQILAPSTQWQMRITKTSPCATPITSKMWSSLVMKQTKKVAHSAKFRV) directs the protein to the chloroplast. In terms of domain architecture, GS beta-grasp spans 77 to 157 (IIAEYIWIGG…VVCDAYTPAG (81 aa)). Positions 99–119 (SKPVSHPSEVPKWNYDGSSTG) are disordered. The GS catalytic domain maps to 161 to 430 (PTNKRHRAAE…LAAQKIALKV (270 aa)).

The protein belongs to the glutamine synthetase family. As to quaternary structure, homooctamer.

The protein resides in the plastid. Its subcellular location is the chloroplast. The enzyme catalyses L-glutamate + NH4(+) + ATP = L-glutamine + ADP + phosphate + H(+). The light-modulated chloroplast enzyme, encoded by a nuclear gene and expressed primarily in leaves, is responsible for the reassimilation of the ammonia generated by photorespiration. The polypeptide is Glutamine synthetase leaf isozyme, chloroplastic (GS2) (Pisum sativum (Garden pea)).